Here is a 234-residue protein sequence, read N- to C-terminus: Leucyl/phenylalanyl-tRNA--protein transferase (234 aa).

It belongs to the L/F-transferase family.

The protein localises to the cytoplasm. It carries out the reaction N-terminal L-lysyl-[protein] + L-leucyl-tRNA(Leu) = N-terminal L-leucyl-L-lysyl-[protein] + tRNA(Leu) + H(+). The enzyme catalyses N-terminal L-arginyl-[protein] + L-leucyl-tRNA(Leu) = N-terminal L-leucyl-L-arginyl-[protein] + tRNA(Leu) + H(+). It catalyses the reaction L-phenylalanyl-tRNA(Phe) + an N-terminal L-alpha-aminoacyl-[protein] = an N-terminal L-phenylalanyl-L-alpha-aminoacyl-[protein] + tRNA(Phe). Its function is as follows. Functions in the N-end rule pathway of protein degradation where it conjugates Leu, Phe and, less efficiently, Met from aminoacyl-tRNAs to the N-termini of proteins containing an N-terminal arginine or lysine. The protein is Leucyl/phenylalanyl-tRNA--protein transferase of Myxococcus xanthus (strain DK1622).